Consider the following 168-residue polypeptide: Desumoylating isopeptidase 1 (168 aa).

The PPPDE domain maps to 7–149 (YPVKLYVYDL…FGQALRPFLD (143 aa)). The active site involves H38. The short motif at 83–91 (IFLEYLSSL) is the Nuclear export signal 1 element. C108 is a catalytic residue. A Nuclear export signal 2 motif is present at residues 139 to 153 (PFGQALRPFLDSIQI).

The protein belongs to the DeSI family. As to quaternary structure, homodimer. Interacts with UBQLN4; leading to the export of UBQLN4 from the nucleus.

Its subcellular location is the cytoplasm. The protein resides in the nucleus. It catalyses the reaction S-hexadecanoyl-L-cysteinyl-[protein] + H2O = L-cysteinyl-[protein] + hexadecanoate + H(+). In terms of biological role, protease which deconjugates SUMO1, SUMO2 and SUMO3 from some substrate proteins. Has isopeptidase but not SUMO-processing activity. Desumoylates ZBTB46. Collaborates with UBQLN4 in the export of ubiquitinated proteins from the nucleus to the cytoplasm. Exhibits palmitoyl protein thioesterase (S-depalmitoylation) activity towards synthetic substrates 4-methylumbelliferyl-6-S-palmitoyl-beta-D-glucopyranoside and S-depalmitoylation probe 5 (DPP-5). This chain is Desumoylating isopeptidase 1 (Desi1), found in Rattus norvegicus (Rat).